We begin with the raw amino-acid sequence, 86 residues long: UPF0297 protein STH1998 (86 aa).

The protein belongs to the UPF0297 family.

This is UPF0297 protein STH1998 from Symbiobacterium thermophilum (strain DSM 24528 / JCM 14929 / IAM 14863 / T).